A 264-amino-acid polypeptide reads, in one-letter code: MGNSGFYLHNTSNCVFADNIKVGQMTEPLTDQQIILGTSTTPVAAKITASEGISLTITNNAQANSSVNIGLDAEKAYQLILDKLGDQIFDGITGSIVESAVQDIIDKITSDPSLGLLKAFYNFQITGKIQCNGLFTSSNVTTLLGGTEIGRFTVTPRSSGSMFLVSADIIASRMEGGVVLALVKEGDTQPCAISYGYSSGVPNLCSLKTCVTNSGSTPTTYSLRIGGLESGVVWVNALSNGNDILGITNTSNVSFLEVIPQKNT.

In Chlamydia muridarum (strain MoPn / Nigg), this protein is Virulence plasmid protein pGP3-D.